A 145-amino-acid polypeptide reads, in one-letter code: ATP synthase epsilon chain (145 aa).

Belongs to the ATPase epsilon chain family. As to quaternary structure, F-type ATPases have 2 components, CF(1) - the catalytic core - and CF(0) - the membrane proton channel. CF(1) has five subunits: alpha(3), beta(3), gamma(1), delta(1), epsilon(1). CF(0) has three main subunits: a, b and c.

The protein localises to the cell inner membrane. Functionally, produces ATP from ADP in the presence of a proton gradient across the membrane. The chain is ATP synthase epsilon chain from Francisella tularensis subsp. tularensis (strain FSC 198).